The sequence spans 77 residues: Large ribosomal subunit protein uL29 (77 aa).

It belongs to the universal ribosomal protein uL29 family.

This is Large ribosomal subunit protein uL29 from Corynebacterium jeikeium (strain K411).